The primary structure comprises 258 residues: Sec-independent protein translocase protein TatC (258 aa).

Residues 2–23 (SVEDTQPLITHLIELRKRLLNC) are Cytoplasmic-facing. A helical membrane pass occupies residues 24-44 (IIAVIVIFLCLVYFANDIYHL). Residues 45–75 (VSAPLIKQLPQGSTMIATDVASPFFTPIKLT) lie on the Periplasmic side of the membrane. A helical membrane pass occupies residues 76-96 (FMVSLILSAPVILYQVWAFIA). The Cytoplasmic segment spans residues 97–115 (PALYKHERRLVVPLLVSSS). The helical transmembrane segment at 116–136 (LLFYIGMAFAYFVVFPLAFGF) threads the bilayer. Over 137-156 (LANTAPEGVQVSTDIASYLS) the chain is Periplasmic. A helical membrane pass occupies residues 157-177 (FVMALFMAFGVSFEVPVAIVL). Topologically, residues 178–192 (LCWMGITSPEDLRKK) are cytoplasmic. Residues 193–210 (RPYVLVGAFVVGMLLTPP) traverse the membrane as a helical segment. Position 211 (Asp211) is a topological domain, periplasmic. Residues 212 to 232 (VFSQTLLAIPMYCLFEIGVFF) traverse the membrane as a helical segment. Over 233-258 (SRFYVGKGRNREEENDAEAESEKTEE) the chain is Cytoplasmic.

This sequence belongs to the TatC family. The Tat system comprises two distinct complexes: a TatABC complex, containing multiple copies of TatA, TatB and TatC subunits, and a separate TatA complex, containing only TatA subunits. Substrates initially bind to the TatABC complex, which probably triggers association of the separate TatA complex to form the active translocon. TatC can form a distinct, stable, multimeric complex independent of TatA and TatB. Each of TatA, TatB and TatC are able to interact in pairs without the third partner. Interacts with the signal sequence of DmsA and DmsD.

Its subcellular location is the cell inner membrane. Its function is as follows. Part of the twin-arginine translocation (Tat) system that transports large folded proteins containing a characteristic twin-arginine motif in their signal peptide across membranes. Together with TatB, TatC is part of a receptor directly interacting with Tat signal peptides. The polypeptide is Sec-independent protein translocase protein TatC (Escherichia coli (strain K12)).